Consider the following 118-residue polypeptide: Large ribosomal subunit protein bL20 (118 aa).

Belongs to the bacterial ribosomal protein bL20 family.

In terms of biological role, binds directly to 23S ribosomal RNA and is necessary for the in vitro assembly process of the 50S ribosomal subunit. It is not involved in the protein synthesizing functions of that subunit. The polypeptide is Large ribosomal subunit protein bL20 (Erwinia tasmaniensis (strain DSM 17950 / CFBP 7177 / CIP 109463 / NCPPB 4357 / Et1/99)).